Here is a 127-residue protein sequence, read N- to C-terminus: Dual endothelin-1/VEGF signal peptide receptor (127 aa).

Topologically, residues 1 to 65 (MNALYVTTVP…EMKSRWNWGS (65 aa)) are extracellular. Residues 66 to 84 (ITCIICFTCVGSQLSMSSS) traverse the membrane as a helical segment. Residues 85 to 127 (KASNFSGPLQLYQRGIGHITNSYKRPQAPAWPCLSSGTMGRSH) lie on the Cytoplasmic side of the membrane.

Widely expressed with higher levels in kidney and aorta.

It is found in the cell membrane. Dual receptor for both endothelin-1 and the signal sequence of vascular endothelial growth factor A. Does not act as a receptor for angiotensin-2. Does not bind the VEGFA mature protein. May play a role in angiogenesis with a significant role in cardiovascular and neural development. This Mus musculus (Mouse) protein is Dual endothelin-1/VEGF signal peptide receptor.